The chain runs to 160 residues: Large ribosomal subunit protein eL21 (160 aa).

Composition is skewed to basic and acidic residues over residues 112–123 (NDQKKKEAKEKG) and 136–145 (REAHFVRTNG). The segment at 112-145 (NDQKKKEAKEKGTWVQLKRQPAPPREAHFVRTNG) is disordered.

The protein belongs to the eukaryotic ribosomal protein eL21 family. In terms of assembly, component of the large ribosomal subunit.

The protein resides in the cytoplasm. It localises to the cytosol. The protein localises to the endoplasmic reticulum. Component of the large ribosomal subunit. The ribosome is a large ribonucleoprotein complex responsible for the synthesis of proteins in the cell. This Mus musculus (Mouse) protein is Large ribosomal subunit protein eL21.